We begin with the raw amino-acid sequence, 429 residues long: Ribosomal RNA small subunit methyltransferase B (429 aa).

Residues 254–260 (CAAPGGK), aspartate 277, aspartate 303, and aspartate 322 contribute to the S-adenosyl-L-methionine site. The Nucleophile role is filled by cysteine 375.

It belongs to the class I-like SAM-binding methyltransferase superfamily. RsmB/NOP family.

The protein resides in the cytoplasm. The catalysed reaction is cytidine(967) in 16S rRNA + S-adenosyl-L-methionine = 5-methylcytidine(967) in 16S rRNA + S-adenosyl-L-homocysteine + H(+). Functionally, specifically methylates the cytosine at position 967 (m5C967) of 16S rRNA. This chain is Ribosomal RNA small subunit methyltransferase B, found in Yersinia pseudotuberculosis serotype O:1b (strain IP 31758).